A 438-amino-acid chain; its full sequence is Metacaspase-1B (438 aa).

A disordered region spans residues 1-125 (MYYHHSHQGW…SQHFGRGAPS (125 aa)). The segment covering 29–38 (PYPYSSNAQY) has biased composition (low complexity). Residues 39-74 (QPPPGPPPTSHYAPPPGPPPSHYYPPPGSYPSPAPS) show a composition bias toward pro residues. Active-site residues include His222 and Cys278.

This sequence belongs to the peptidase C14B family.

Functionally, involved in cell death (apoptosis). The sequence is that of Metacaspase-1B (casB) from Aspergillus niger (strain ATCC MYA-4892 / CBS 513.88 / FGSC A1513).